We begin with the raw amino-acid sequence, 305 residues long: tRNA uridine(34) hydroxylase (305 aa).

The region spanning 125–219 is the Rhodanese domain; sequence ADENTVVVDT…YLEEVPREQS (95 aa). C179 (cysteine persulfide intermediate) is an active-site residue.

This sequence belongs to the TrhO family.

It catalyses the reaction uridine(34) in tRNA + AH2 + O2 = 5-hydroxyuridine(34) in tRNA + A + H2O. Functionally, catalyzes oxygen-dependent 5-hydroxyuridine (ho5U) modification at position 34 in tRNAs. In Brucella canis (strain ATCC 23365 / NCTC 10854 / RM-666), this protein is tRNA uridine(34) hydroxylase.